A 543-amino-acid chain; its full sequence is Peptide chain release factor 3 (543 aa).

The tr-type G domain maps to 21 to 289; the sequence is KKRRTFAIIS…ALSDWAPSPL (269 aa). GTP is bound by residues 30–37, 98–102, and 152–155; these read SHPDAGKT, DTPGH, and NKLD.

The protein belongs to the TRAFAC class translation factor GTPase superfamily. Classic translation factor GTPase family. PrfC subfamily.

It is found in the cytoplasm. Its function is as follows. Increases the formation of ribosomal termination complexes and stimulates activities of RF-1 and RF-2. It binds guanine nucleotides and has strong preference for UGA stop codons. It may interact directly with the ribosome. The stimulation of RF-1 and RF-2 is significantly reduced by GTP and GDP, but not by GMP. The polypeptide is Peptide chain release factor 3 (Thiobacillus denitrificans (strain ATCC 25259 / T1)).